Consider the following 49-residue polypeptide: Cytochrome b559 subunit beta (49 aa).

The helical transmembrane segment at 24–40 (WLAVHVLGVPTVFFLGA) threads the bilayer. His28 provides a ligand contact to heme.

This sequence belongs to the PsbE/PsbF family. As to quaternary structure, heterodimer of an alpha subunit and a beta subunit. PSII is composed of 1 copy each of membrane proteins PsbA, PsbB, PsbC, PsbD, PsbE, PsbF, PsbH, PsbI, PsbJ, PsbK, PsbL, PsbM, PsbT, PsbX, PsbY, Psb30/Ycf12, peripheral proteins PsbO, CyanoQ (PsbQ), PsbU, PsbV and a large number of cofactors. It forms dimeric complexes. Requires heme b as cofactor.

It is found in the cellular thylakoid membrane. This b-type cytochrome is tightly associated with the reaction center of photosystem II (PSII). PSII is a light-driven water:plastoquinone oxidoreductase that uses light energy to abstract electrons from H(2)O, generating O(2) and a proton gradient subsequently used for ATP formation. It consists of a core antenna complex that captures photons, and an electron transfer chain that converts photonic excitation into a charge separation. The polypeptide is Cytochrome b559 subunit beta (Prochlorococcus marinus (strain MIT 9303)).